Consider the following 1687-residue polypeptide: MGQGESTPLSLTLDHWKDVKTRAHNLSVEIRKGKWQTFCSSEWPTFEVGWPPEGTFNPSIISAVKRIVFQETGGHPDQVPYIIVWQDLSNSPPPWVPPLAKIAVASGQDNGRKSAGGRPSAPSRLPIYPETDSLFLLSEPPPYPTSPPPPPAPHAARPAPGLMAEGLGSEGPAAGTRSRRPRSPTGDTGPDSTVALPLRAVGPPAEPNGLVPLQYWPFSSADLYNWKSNHPSFSENPTGLTGLLESLMFSHQPTWDDCQQLLQVLFTTEERERILLEARKNVLGVNGAPTQLENLINEAFPLNRPQWDHNTAEGRERLLVYRRTLVAGLKGAARRPTNLAKVREVLQGPTEPPSVFLERLMEAYRRYTPFDPSSEGQKAAVAMSFIGQSAPDIKKKLQRLEGLQDHSLQDLIKEAEKVYHKRETEEEKQEREKKETEERERRRDRRQEKNLTKILAAVVSEKGFRGRQAGNLSNRAMRAPREGRPPLDKDQCAYCKERGHWARECPRKKNARETNVLTLGDQGSRGSDPLPEPRVTLTVEGIPTEFLVDTGAEHSVLTKPMGKMGSKRTVVAGATGSKVYPWTTKRLLKIGQKQVTHSFLVIPECPAPLLGRDLLTKLKAQIQFSTEGPQVTWEDRPAMCLVLNLEEEYRLHEKPVPPSIDPSWLQLFPMVWAEKAGMGLANQVPPVVVELKSDASPVAVRQYPMSKEAREGIRPHIQRFLDLGILVPCQSPWNTPLLPVKKPGTNDYRPVQDLREVNKRVQDIHPTVPNPYNLLSSLPPSHTWYSVLDLKDAFFCLKLHPNSQPLFAFEWRDPEKGNTGQLTWTRLPQGFKNSPTLFDEALHRDLASFRALNPQVVMLQYVDDLLVAAPTYRDCKEGTRRLLQELSKLGYRVSAKKAQLCREEVTYLGYLLKGGKRWLTPARKATVMKIPTPTTPRQVREFLGTAGFCRLWIPGFASLAAPLYPLTREKVPFTWTEAHQEAFGRIKEALLSAPALALPDLTKPFALYVDEKEGVARGVLTQTLGPWRRPVAYLSKKLDPVASGWPTCLKAIAAVALLLKDADKLTLGQNVLVIAPHNLESIVRQPPDRWMTNARMTHYQSLLLNERVSFAPPAILNPATLLPVESDDTPIHICSEILAEETGTRPDLRDQPLPGVPAWYTDGSSFIMDGRRQAGAAIVDNKRTVWASNLPEGTSAQKAELIALTQALRLAEGKSINIYTDSRYAFATAHVHGAIYKQRGLLTSAGKDIKNKEEILALLEAIHLPKRVAIIHCPGHQRGTDPVATGNRKADEAAKQAAQSTRILTETTKNQEHFEPTRGKIKPRELTPDQGREFIQRLHQLTHLGPDKLLQLVGRTSFHIPNLQSVVREITSKCQVCAVTNAVTTYREPGRRQRGDRPGVYWEVDFTEVKPGRYGNRYLLVFIDTFSGWVEAFPTKTETALTVCKKILEEILPRFGIPKVLGSDNGPAFVAQVSQGLATQLGIDWKLHCAYRPQSSGQVERMNRTIKETLTKLALETGGKDWVTLLPLALLRARNTPGQFGLTPYEILHGGPPPVLASGEVVGSNGDFFPVLFTHLKALEVVRTQIWDQIKEAYRPGTVAIPHPFQVGDRVLVRRHRSGSLEPRWKGPYLVLLTTPTAVKVDGIAAWVHASHLKPAPPGAPDESWELEKTDHPLKLRVRRRRNESTA.

Glycine 2 is lipidated: N-myristoyl glycine; by host. Disordered stretches follow at residues 107-126 (GQDN…SRLP), 136-195 (LLSE…STVA), 420-447 (HKRE…DRRQ), and 466-485 (GRQA…EGRP). The PTAP/PSAP motif motif lies at 108 to 111 (QDNG). Over residues 139–153 (EPPPYPTSPPPPPAP) the composition is skewed to pro residues. The PPXY motif motif lies at 140–143 (PPPY). Residues 408 to 453 (LQDLIKEAEKVYHKRETEEEKQEREKKETEERERRRDRRQEKNLTK) are a coiled coil. A CCHC-type zinc finger spans residues 490–507 (DQCAYCKERGHWARECPR). The region spanning 544-614 (TEFLVDTGAE…CPAPLLGRDL (71 aa)) is the Peptidase A2 domain. Catalysis depends on aspartate 549, which acts as the Protease; shared with dimeric partner. The Reverse transcriptase domain occupies 721–912 (LDLGILVPCQ…EEVTYLGYLL (192 aa)). Aspartate 789, aspartate 863, aspartate 864, aspartate 1162, glutamate 1200, aspartate 1221, and aspartate 1291 together coordinate Mg(2+). The RNase H type-1 domain maps to 1153 to 1299 (LPGVPAWYTD…ADEAAKQAAQ (147 aa)). An HHCC-type zinc finger spans residues 1339 to 1377 (HQLTHLGPDKLLQLVGRTSFHIPNLQSVVREITSKCQVC). The region spanning 1394-1552 (RGDRPGVYWE…TPYEILHGGP (159 aa)) is the Integrase catalytic domain. Mg(2+) contacts are provided by aspartate 1405 and aspartate 1464.

As to quaternary structure, homohexamer; further associates as homomultimer. The virus core is composed of a lattice formed from hexagonal rings, each containing six capsid monomers. Interacts (via PPXY motif) with host NEDD4. Interacts (via PSAP motif) with host TSG101. In terms of assembly, the reverse transcriptase is a monomer (Potential). Interacts (via RNase domains) with host release factor ETF1; this interaction is essential for translational readthrough of amber codon between viral gag and pol genes, as well as for viral replication. As to quaternary structure, homodimer. Mg(2+) serves as cofactor. Post-translationally, specific enzymatic cleavages by the viral protease yield mature proteins. The protease is released by autocatalytic cleavage. The polyprotein is cleaved during and after budding, this process is termed maturation. In terms of processing, phosphorylated on serine residues.

Its subcellular location is the virion. It localises to the host cell membrane. The protein resides in the host late endosome membrane. It is found in the host endosome. The protein localises to the host multivesicular body. Its subcellular location is the host cytoplasm. It carries out the reaction DNA(n) + a 2'-deoxyribonucleoside 5'-triphosphate = DNA(n+1) + diphosphate. The catalysed reaction is Endonucleolytic cleavage to 5'-phosphomonoester.. Its activity is regulated as follows. Protease: Most efficiently inhibited by Amprenavir, which is able to block Gag-Pol processing in infected cells. Plays a role in budding and is processed by the viral protease during virion maturation outside the cell. During budding, it recruits, in a PPXY-dependent or independent manner, Nedd4-like ubiquitin ligases that conjugate ubiquitin molecules to Gag-Pol, or to Gag-Pol binding host factors. Interaction with HECT ubiquitin ligases probably links the viral protein to the host ESCRT pathway and facilitates release. Functionally, targets Gag and gag-pol polyproteins to the plasma membrane via a multipartite membrane binding signal, that includes its myristoylated N-terminus. Also mediates nuclear localization of the pre-integration complex. In terms of biological role, constituent of the pre-integration complex (PIC) which tethers the latter to mitotic chromosomes. This allows the integration of the viral genome into the host DNA. Its function is as follows. Forms the spherical core of the virion that encapsulates the genomic RNA-nucleocapsid complex. Involved in the packaging and encapsidation of two copies of the genome. Binds with high affinity to conserved UCUG elements within the packaging signal, located near the 5'-end of the genome. This binding is dependent on genome dimerization. Acts as a nucleic acid chaperone which is involved in rearrangement of nucleic acid secondary structures during gRNA retrotranscription. Functionally, protease: The aspartyl protease mediates proteolytic cleavages of Gag and Gag-Pol polyproteins during or shortly after the release of the virion from the plasma membrane. Cleavages take place as an ordered, step-wise cascade to yield mature proteins. This process is called maturation. Displays maximal activity during the budding process just prior to particle release from the cell. In terms of biological role, reverse transcriptase/ribonuclease H: RT is a multifunctional enzyme that converts the viral dimeric RNA genome into dsDNA in the cytoplasm, shortly after virus entry into the cell. This enzyme displays a DNA polymerase activity that can copy either DNA or RNA templates, and a ribonuclease H (RNase H) activity that cleaves the RNA strand of RNA-DNA heteroduplexes in a partially processive 3' to 5' endonucleasic mode. Conversion of viral genomic RNA into dsDNA requires many steps. A tRNA binds to the primer-binding site (PBS) situated at the 5' end of the viral RNA. RT uses the 3' end of the tRNA primer to perform a short round of RNA-dependent minus-strand DNA synthesis. The reading proceeds through the U5 region and ends after the repeated (R) region which is present at both ends of viral RNA. The portion of the RNA-DNA heteroduplex is digested by the RNase H, resulting in a ssDNA product attached to the tRNA primer. This ssDNA/tRNA hybridizes with the identical R region situated at the 3' end of viral RNA. This template exchange, known as minus-strand DNA strong stop transfer, can be either intra- or intermolecular. RT uses the 3' end of this newly synthesized short ssDNA to perform the RNA-dependent minus-strand DNA synthesis of the whole template. RNase H digests the RNA template except for a polypurine tract (PPT) situated at the 5' end of the genome. It is not clear if both polymerase and RNase H activities are simultaneous. RNase H probably can proceed both in a polymerase-dependent (RNA cut into small fragments by the same RT performing DNA synthesis) and a polymerase-independent mode (cleavage of remaining RNA fragments by free RTs). Secondly, RT performs DNA-directed plus-strand DNA synthesis using the PPT that has not been removed by RNase H as primers. PPT and tRNA primers are then removed by RNase H. The 3' and 5' ssDNA PBS regions hybridize to form a circular dsDNA intermediate. Strand displacement synthesis by RT to the PBS and PPT ends produces a blunt ended, linear dsDNA copy of the viral genome that includes long terminal repeats (LTRs) at both ends. Its function is as follows. Catalyzes viral DNA integration into the host chromosome, by performing a series of DNA cutting and joining reactions. This enzyme activity takes place after virion entry into a cell and reverse transcription of the RNA genome in dsDNA. The first step in the integration process is 3' processing. This step requires a complex comprising the viral genome, matrix protein and integrase. This complex is called the pre-integration complex (PIC). The integrase protein removes 2 nucleotides from each 3' end of the viral DNA, leaving recessed CA OH's at the 3' ends. In the second step that requires cell division, the PIC enters cell nucleus. In the third step, termed strand transfer, the integrase protein joins the previously processed 3' ends to the 5' ends of strands of target cellular DNA at the site of integration. The last step is viral DNA integration into host chromosome. This Phascolarctos cinereus (Koala) protein is Gag-Pol polyprotein (pro-pol).